A 293-amino-acid chain; its full sequence is 4-hydroxybenzoate octaprenyltransferase (293 aa).

The next 8 membrane-spanning stretches (helical) occupy residues 26–46 (IGTL…AKGM), 49–69 (IKVL…GCII), 102–122 (LFAL…PLVV), 148–168 (FLGI…LGEV), 173–193 (WWLF…YAMI), 217–237 (WIAV…LSAE), 240–260 (FIYA…QRLI), and 272–292 (FLNN…DYLL).

It belongs to the UbiA prenyltransferase family. Mg(2+) serves as cofactor.

It localises to the cell inner membrane. The enzyme catalyses all-trans-octaprenyl diphosphate + 4-hydroxybenzoate = 4-hydroxy-3-(all-trans-octaprenyl)benzoate + diphosphate. It participates in cofactor biosynthesis; ubiquinone biosynthesis. Functionally, catalyzes the prenylation of para-hydroxybenzoate (PHB) with an all-trans polyprenyl group. Mediates the second step in the final reaction sequence of ubiquinone-8 (UQ-8) biosynthesis, which is the condensation of the polyisoprenoid side chain with PHB, generating the first membrane-bound Q intermediate 3-octaprenyl-4-hydroxybenzoate. The protein is 4-hydroxybenzoate octaprenyltransferase of Shewanella denitrificans (strain OS217 / ATCC BAA-1090 / DSM 15013).